Consider the following 385-residue polypeptide: Iron uptake system component EfeM (385 aa).

Positions 1 to 22 (MNFTKIAVSAGCILALCAGCGA) are cleaved as a signal peptide.

The protein belongs to the EfeM/EfeO family. In terms of assembly, component of the iron transporter efeUOB/M complex composed of EfeU, EfeM and EfeB; EfeU is essential for the complex formation.

It localises to the cell membrane. Its subcellular location is the membrane raft. Functionally, part of the iron transporter system efeUOB/M involved in iron import. Specifically binds Fe(3+), which is produced by EfeB-mediated oxidation of Fe(2+), and delivers it to the cell membrane permease EfeU. The sequence is that of Iron uptake system component EfeM from Bacillus subtilis (strain 168).